The sequence spans 244 residues: Demethylmenaquinone methyltransferase (244 aa).

S-adenosyl-L-methionine-binding positions include threonine 65, aspartate 86, and 114 to 115; that span reads DA.

This sequence belongs to the class I-like SAM-binding methyltransferase superfamily. MenG/UbiE family.

It catalyses the reaction a 2-demethylmenaquinol + S-adenosyl-L-methionine = a menaquinol + S-adenosyl-L-homocysteine + H(+). The protein operates within quinol/quinone metabolism; menaquinone biosynthesis; menaquinol from 1,4-dihydroxy-2-naphthoate: step 2/2. Methyltransferase required for the conversion of demethylmenaquinol (DMKH2) to menaquinol (MKH2). The polypeptide is Demethylmenaquinone methyltransferase (Lactobacillus johnsonii (strain CNCM I-12250 / La1 / NCC 533)).